We begin with the raw amino-acid sequence, 118 residues long: Nitrogenase-stabilizing/protective protein NifW (118 aa).

This sequence belongs to the NifW family. Homotrimer; associates with NifD.

In terms of biological role, may protect the nitrogenase Fe-Mo protein from oxidative damage. This Rhodopseudomonas palustris (strain BisB5) protein is Nitrogenase-stabilizing/protective protein NifW.